A 173-amino-acid chain; its full sequence is uncharacterized protein (173 aa).

An N-terminal signal peptide occupies residues 1–20 (MWYKVLGIVSLCSVYVSTQG). Asn53 is a glycosylation site (N-linked (GlcNAc...) asparagine).

Component of the acid-insoluble organic matrix of calcified shell layers (at protein level).

The protein resides in the secreted. This is an uncharacterized protein from Haliotis asinina (Donkey's ear abalone).